The primary structure comprises 429 residues: Trigger factor (429 aa).

Residues 164-249 (GDTAVIDFEG…VKEVKTKVLP (86 aa)) form the PPIase FKBP-type domain.

The protein belongs to the FKBP-type PPIase family. Tig subfamily.

The protein resides in the cytoplasm. The catalysed reaction is [protein]-peptidylproline (omega=180) = [protein]-peptidylproline (omega=0). In terms of biological role, involved in protein export. Acts as a chaperone by maintaining the newly synthesized protein in an open conformation. Functions as a peptidyl-prolyl cis-trans isomerase. This is Trigger factor from Lysinibacillus sphaericus (strain C3-41).